A 334-amino-acid polypeptide reads, in one-letter code: MATLKEKLIAPVAEEETTIPNNKITVVGVGQVGMACAISILGKSLTDELALVDVLEDKLKGEMMDLQHGSLFLQTPKIVADKDYSVTANSKIVVVTAGVRQQEGESRLNLVQRNVNVFKFIIPQIVKYSPDCIIIVVSNPVDILTYVTWKLSGLPKHRVIGSGCNLDSARFRYLMAEKLGVHPSSCHGWILGEHGDSSVAVWSGVNVAGVSLQELNPEMGTDNDSENWKEVHKMVVESAYEVIKLKGYTNWAIGLSVADLIESMLKNLSRIHPVSTMVQGMYGIENEVFLSLPCVLNARGLTSVINQKLKDDEVAQLKNSADTLWGIQKDLKDL.

At Ala-2 the chain carries N-acetylalanine. Lys-7 is modified (N6-acetyllysine). NAD(+) contacts are provided by residues 30–58 (GQVG…LEDK) and Arg-100. Residue Ser-44 is modified to Phosphoserine. Lys-58 carries the post-translational modification N6-acetyllysine. Position 107 (Arg-107) interacts with substrate. Residue Lys-119 is modified to N6-acetyllysine. Residue Asn-139 coordinates NAD(+). Positions 139 and 170 each coordinate substrate. The active-site Proton acceptor is His-194. At Tyr-240 the chain carries Phosphotyrosine. Thr-249 is a binding site for substrate. Lys-329 is modified (N6-acetyllysine).

The protein belongs to the LDH/MDH superfamily. LDH family. As to quaternary structure, homotetramer. Interacts with PTEN upstream reading frame protein MP31; the interaction leads to inhibition of mitochondrial lactate dehydrogenase activity, preventing conversion of lactate to pyruvate in mitochondria.

Its subcellular location is the cytoplasm. It is found in the mitochondrion inner membrane. It carries out the reaction (S)-lactate + NAD(+) = pyruvate + NADH + H(+). It functions in the pathway fermentation; pyruvate fermentation to lactate; (S)-lactate from pyruvate: step 1/1. Interconverts simultaneously and stereospecifically pyruvate and lactate with concomitant interconversion of NADH and NAD(+). The protein is L-lactate dehydrogenase B chain (LDHB) of Sus scrofa (Pig).